The following is an 833-amino-acid chain: Prickle-like protein 1 (833 aa).

The tract at residues 1–22 (MPLEMDQKISKHTFGCQRSSTS) is disordered. The 109-residue stretch at 14–122 (FGCQRSSTSD…NIKMLSRAVM (109 aa)) folds into the PET domain. LIM zinc-binding domains lie at 124–188 (AMCE…ELLK), 189–249 (PRCS…HYAE), and 250–313 (YCES…EDVH). Disordered regions lie at residues 312 to 346 (VHAS…ADQC), 432 to 456 (EDNR…RNSR), 603 to 702 (CQEK…ERNP), 767 to 786 (CSSS…QPIP), and 805 to 833 (NALS…CIIS). Composition is skewed to basic and acidic residues over residues 432-453 (EDNR…DLQR) and 603-614 (CQEKPPPEEKPM). Residues 669 to 680 (RPHHHRRRKSRK) show a composition bias toward basic residues. Residues 817-833 (TKSKKKKGHKGKNCIIS) are compositionally biased toward basic residues. A Cysteine methyl ester modification is found at cysteine 830. A lipid anchor (S-farnesyl cysteine) is attached at cysteine 830. A propeptide spans 831–833 (IIS) (removed in mature form).

It belongs to the prickle / espinas / testin family. As to quaternary structure, interacts with dvl2/dsh and mapk8/jnk1.

It is found in the cell membrane. Acts in a planar cell polarity (PCP) complex; polarization along the apical/basal axis of epithelial cells. Regulates the polarized assembly of fibronectrin on the surface of the mesoderm during gastrulation. Essential for gastrulation cell movements, cooperating with dvl2/dsh to activate jnk. Acts together with tes to control axial elongation. The protein is Prickle-like protein 1 of Xenopus tropicalis (Western clawed frog).